Consider the following 418-residue polypeptide: Putative methylthiotransferase HP_0285 (418 aa).

One can recognise an MTTase N-terminal domain in the interval 2 to 110; it reads KKVYFKTFGC…INALLQEKKR (109 aa). Cys11, Cys45, Cys74, Cys144, Cys148, and Cys151 together coordinate [4Fe-4S] cluster. Positions 130 to 355 constitute a Radical SAM core domain; that stretch reads FVGKTRAFIK…KDLIFHKNKA (226 aa).

Belongs to the methylthiotransferase family. [4Fe-4S] cluster is required as a cofactor.

The chain is Putative methylthiotransferase HP_0285 from Helicobacter pylori (strain ATCC 700392 / 26695) (Campylobacter pylori).